The following is a 336-amino-acid chain: PTS system glucitol/sorbitol-specific EIIB component (336 aa).

One can recognise a PTS EIIB type-5 domain in the interval 3-195; sequence KYNAIKIVKG…AVQSMITTIL (193 aa). The active-site Phosphocysteine intermediate; for EIIB activity is the Cys-75. Residue Cys-75 is modified to Phosphocysteine; by EIIA. 5 helical membrane-spanning segments follow: residues 194 to 214, 228 to 248, 250 to 270, 278 to 298, and 312 to 332; these read ILPF…SGFG, GIGL…ALLG, GAVI…KGTI, ALFA…LGLA, and VLYS…VASI.

The protein localises to the cell membrane. It catalyses the reaction D-sorbitol(out) + N(pros)-phospho-L-histidyl-[protein] = D-sorbitol 6-phosphate(in) + L-histidyl-[protein]. In terms of biological role, the phosphoenolpyruvate-dependent sugar phosphotransferase system (sugar PTS), a major carbohydrate active transport system, catalyzes the phosphorylation of incoming sugar substrates concomitantly with their translocation across the cell membrane. The enzyme II complex composed of SrlA, SrlB and SrlE is involved in glucitol/sorbitol transport. In Clostridium beijerinckii (strain ATCC 51743 / NCIMB 8052) (Clostridium acetobutylicum), this protein is PTS system glucitol/sorbitol-specific EIIB component (srlE).